The following is a 177-amino-acid chain: Large ribosomal subunit protein uL6 (177 aa).

This sequence belongs to the universal ribosomal protein uL6 family. As to quaternary structure, part of the 50S ribosomal subunit.

Its function is as follows. This protein binds to the 23S rRNA, and is important in its secondary structure. It is located near the subunit interface in the base of the L7/L12 stalk, and near the tRNA binding site of the peptidyltransferase center. The sequence is that of Large ribosomal subunit protein uL6 from Pseudoalteromonas atlantica (strain T6c / ATCC BAA-1087).